Here is a 357-residue protein sequence, read N- to C-terminus: 3-isopropylmalate dehydrogenase (357 aa).

Position 75 to 88 (75 to 88 (GPKWEHLPPAEQPE)) interacts with NAD(+). Substrate contacts are provided by arginine 96, arginine 106, arginine 135, and aspartate 224. Aspartate 224, aspartate 248, and aspartate 252 together coordinate Mg(2+). 282–294 (GSAPDIAGQGIAN) provides a ligand contact to NAD(+).

This sequence belongs to the isocitrate and isopropylmalate dehydrogenases family. LeuB type 1 subfamily. As to quaternary structure, homodimer. Mg(2+) is required as a cofactor. Mn(2+) serves as cofactor.

It is found in the cytoplasm. It carries out the reaction (2R,3S)-3-isopropylmalate + NAD(+) = 4-methyl-2-oxopentanoate + CO2 + NADH. The protein operates within amino-acid biosynthesis; L-leucine biosynthesis; L-leucine from 3-methyl-2-oxobutanoate: step 3/4. In terms of biological role, catalyzes the oxidation of 3-carboxy-2-hydroxy-4-methylpentanoate (3-isopropylmalate) to 3-carboxy-4-methyl-2-oxopentanoate. The product decarboxylates to 4-methyl-2 oxopentanoate. This is 3-isopropylmalate dehydrogenase from Desulfotalea psychrophila (strain LSv54 / DSM 12343).